The sequence spans 117 residues: MTRVKRGNVARKRRKKILKLAKGFRGSHSKLFRTANQQVMKALRNAYRDRRKKKRDFRRLWITRINASARQNGISYSKLTGQMKKANIQLNRKMLAQLAVLDPQAFAKVVEVASQAQ.

The protein belongs to the bacterial ribosomal protein bL20 family.

Its function is as follows. Binds directly to 23S ribosomal RNA and is necessary for the in vitro assembly process of the 50S ribosomal subunit. It is not involved in the protein synthesizing functions of that subunit. The chain is Large ribosomal subunit protein bL20 from Gloeothece citriformis (strain PCC 7424) (Cyanothece sp. (strain PCC 7424)).